A 211-amino-acid polypeptide reads, in one-letter code: 1-deoxy-D-xylulose 5-phosphate reductoisomerase (211 aa).

Asp-14 provides a ligand contact to Mn(2+). Residues Ser-15, Glu-16, Ser-40, His-63, Ser-76, Asn-81, Lys-82, and Glu-85 each contribute to the 1-deoxy-D-xylulose 5-phosphate site. Glu-16 serves as a coordination point for Mn(2+). Glu-85 is a Mn(2+) binding site.

This sequence belongs to the DXR family. Mn(2+) is required as a cofactor. The cofactor is Mg(2+). Mostly expressed in flowers and, to a lower extent, in leaves.

It localises to the plastid. The protein localises to the chloroplast stroma. The enzyme catalyses 2-C-methyl-D-erythritol 4-phosphate + NADP(+) = 1-deoxy-D-xylulose 5-phosphate + NADPH + H(+). It functions in the pathway isoprenoid biosynthesis; isopentenyl diphosphate biosynthesis via DXP pathway; isopentenyl diphosphate from 1-deoxy-D-xylulose 5-phosphate: step 1/6. Its function is as follows. Enzyme of the plastid non-mevalonate pathway for isoprenoid biosynthesis that catalyzes the NADPH-dependent rearrangement and reduction of 1-deoxy-D-xylulose-5-phosphate (DXP) to 2-C-methyl-D-erythritol 4-phosphate (MEP). Required for chloroplast development. The sequence is that of 1-deoxy-D-xylulose 5-phosphate reductoisomerase from Thymus vulgaris (Thyme).